Here is a 396-residue protein sequence, read N- to C-terminus: MIIEPRMRGFICLTAHPTGCEQNIKNQIAYIKSKGHIEGAKRVLVIGASTGFGLASRITSAFGCDASTIGVFFEKPASQGKTASPGWYNSAAFENEAKKAGLYAKSINGDAFSNDVKQQTINLIKKDLGQIDLIIYSLASPVRLHPTTGVLHRSVLKPIGATFTNKTVDFHSGKVSEISIAPCEGDDIENTVTVMGGEDWSMWIDALKKENLLANNATTIAYSYIGPEVTEAVYRKGTIGKAKDHLEATAFSITDSLADLGGKAYVSVNKALVTQASSAIPVIPLYISLLYKIMKSEGIHEGCIEQMQRLYAQRLYTGNEIPTDDKGRIRIDDWEMRADVQEKVAKLWLEATTETLPEIGDLEGYRSDFHNLFGFGFEGVEYKADTNEMVNVSSII.

Residues 47–52 (GASTGF), 73–74 (FE), 110–111 (DA), and 138–139 (LA) contribute to the NAD(+) site. A substrate-binding site is contributed by Tyr-224. The active-site Proton donor is Tyr-234. NAD(+) contacts are provided by residues Lys-243 and 272–274 (LVT).

Belongs to the TER reductase family. As to quaternary structure, monomer.

The enzyme catalyses a 2,3-saturated acyl-[ACP] + NAD(+) = a (2E)-enoyl-[ACP] + NADH + H(+). It functions in the pathway lipid metabolism; fatty acid biosynthesis. Involved in the final reduction of the elongation cycle of fatty acid synthesis (FAS II). Catalyzes the reduction of a carbon-carbon double bond in an enoyl moiety that is covalently linked to an acyl carrier protein (ACP). The protein is Enoyl-[acyl-carrier-protein] reductase [NADH] of Flavobacterium psychrophilum (strain ATCC 49511 / DSM 21280 / CIP 103535 / JIP02/86).